An 833-amino-acid chain; its full sequence is cGMP-specific 3',5'-cyclic phosphodiesterase (833 aa).

At S60 the chain carries Phosphoserine. Positions 82 to 101 (FLSDSGKKEQMPLTSPRFDS) are disordered. GAF domains are found at residues 122 to 272 (DVTA…GIVL) and 304 to 461 (SLEV…GLGI). One can recognise a PDEase domain in the interval 494 to 818 (ETRELQALAA…QKWQALADQQ (325 aa)). H571 acts as the Proton donor in catalysis. Residues H575, H611, D612, and D722 each contribute to the Zn(2+) site. D612 contacts Mg(2+). Position 775 (Q775) interacts with 3',5'-cyclic GMP.

The protein belongs to the cyclic nucleotide phosphodiesterase family. It depends on Zn(2+) as a cofactor. The cofactor is Mg(2+). Post-translationally, phosphorylation is regulated by binding of cGMP to the two allosteric sites. Phosphorylation by PRKG1 leads to its activation.

The catalysed reaction is 3',5'-cyclic GMP + H2O = GMP + H(+). Its pathway is purine metabolism; 3',5'-cyclic GMP degradation; GMP from 3',5'-cyclic GMP: step 1/1. In terms of biological role, plays a role in signal transduction by regulating the intracellular concentration of cyclic nucleotides. This phosphodiesterase catalyzes the specific hydrolysis of cGMP to 5'-GMP. Specifically regulates nitric-oxide-generated cGMP. In Rattus norvegicus (Rat), this protein is cGMP-specific 3',5'-cyclic phosphodiesterase (Pde5a).